A 478-amino-acid chain; its full sequence is 3-ketoacyl-CoA synthase 3 (478 aa).

The N-terminal stretch at 1-25 (MDLLVMLLSLLVSYLIFKIWKRIDS) is a signal peptide. The FAE domain maps to 26–313 (KRDQNCYILD…FMLCLLLKKL (288 aa)). Catalysis depends on residues cysteine 168, histidine 247, histidine 345, histidine 349, histidine 378, and asparagine 382.

The protein belongs to the thiolase-like superfamily. Chalcone/stilbene synthases family. As to expression, expressed in siliques, leaves, stems and seedlings.

It is found in the endoplasmic reticulum. It carries out the reaction a very-long-chain acyl-CoA + malonyl-CoA + H(+) = a very-long-chain 3-oxoacyl-CoA + CO2 + CoA. Its pathway is lipid metabolism; fatty acid biosynthesis. The chain is 3-ketoacyl-CoA synthase 3 from Arabidopsis thaliana (Mouse-ear cress).